We begin with the raw amino-acid sequence, 238 residues long: uncharacterized protein (238 aa).

This is an uncharacterized protein from Acidianus filamentous virus 2 (isolate Italy/Pozzuoli) (AFV-2).